The primary structure comprises 261 residues: MSESLHFTRHGPILEITLDRPKANAIDAKTSFEMGEVFLNFRDDPELRVAIITGGGEKFFSAGWDLKAAAEGEAPDADFGPGGFAGLTEIFDLDKPVIAAVNGYAFGGGFELALAADFIVCADNASFALPEAKLGIVPDSGGVLRLPKLLPPAIVNEMLMTGRRMDAEEALRWGIVNRVVSQQALMDSARELAQQLVNSAPLAIAALKEIYRATSEMPVEEGYRYIRSGALKHYPSVLHSEDAIEGPQAFAEKRDPVWKGR.

The Nucleophile role is filled by Glu111. Catalysis depends on Glu131, which acts as the Proton acceptor.

This sequence belongs to the enoyl-CoA hydratase/isomerase family.

The enzyme catalyses (R)-carnitinyl-CoA = crotonobetainyl-CoA + H2O. It participates in amine and polyamine metabolism; carnitine metabolism. Its function is as follows. Catalyzes the reversible dehydration of L-carnitinyl-CoA to crotonobetainyl-CoA. The sequence is that of Carnitinyl-CoA dehydratase from Citrobacter koseri (strain ATCC BAA-895 / CDC 4225-83 / SGSC4696).